The sequence spans 472 residues: 3-isopropylmalate dehydratase large subunit (472 aa).

Residues Cys353, Cys414, and Cys417 each contribute to the [4Fe-4S] cluster site.

It belongs to the aconitase/IPM isomerase family. LeuC type 1 subfamily. In terms of assembly, heterodimer of LeuC and LeuD. The cofactor is [4Fe-4S] cluster.

The enzyme catalyses (2R,3S)-3-isopropylmalate = (2S)-2-isopropylmalate. It participates in amino-acid biosynthesis; L-leucine biosynthesis; L-leucine from 3-methyl-2-oxobutanoate: step 2/4. Catalyzes the isomerization between 2-isopropylmalate and 3-isopropylmalate, via the formation of 2-isopropylmaleate. The polypeptide is 3-isopropylmalate dehydratase large subunit (Acinetobacter baumannii (strain ATCC 17978 / DSM 105126 / CIP 53.77 / LMG 1025 / NCDC KC755 / 5377)).